Consider the following 87-residue polypeptide: Small ribosomal subunit protein bS20 (87 aa).

Residues 1 to 22 are disordered; it reads MANHKSALKRHKQSLKRAARNR.

This sequence belongs to the bacterial ribosomal protein bS20 family.

Its function is as follows. Binds directly to 16S ribosomal RNA. In Nitratidesulfovibrio vulgaris (strain DP4) (Desulfovibrio vulgaris), this protein is Small ribosomal subunit protein bS20.